We begin with the raw amino-acid sequence, 529 residues long: MSLNDYPQQVNKRRTFAIISHPDAGKTTITEKVLLYGQAIQTAGSVKGKGSSTHAKSDWMEMEKQRGISITTSVMQFPYNDCLVNLLDTPGHEDFSEDTYRTLTAVDSCLMVIDSAKGVEERTIKLMEVTRLRDTPILTFMNKLDRDIRDPMELLDEVENVLNIHCAPITWPIGCGKLFKGVYHLYKDETYLYQTGQGHTIQEKRVIKGLDNPELDAAVGDDLAQQLRDELELVQGASNEFDLDAFLQGELTPVFFGTALGNFGVDHFLDGLTQWAPAPQSRQADSRAVASSEQKLTGFVFKIQANMDPKHRDRVAFMRVVSGKYEKGMKLRHVRLGKDVVISDALTFMAGDRSHAEEAYAGDIIGLHNHGTIQIGDTFTQGEELKFTGIPNFAPELFRRIRLKDPLKQKQLLKGLVQLSEEGAVQVFRPLMNNDLIVGAVGVLQFDVVVSRLKSEYNVEAIYENINVATARWVECSDAKKFDEFKRKNEQNLALDGGDNLTYIAPTMVNLNLAQERYPDVKFFKTREH.

Residues 11 to 280 enclose the tr-type G domain; that stretch reads NKRRTFAIIS…GLTQWAPAPQ (270 aa). GTP contacts are provided by residues 20–27, 88–92, and 142–145; these read SHPDAGKT, DTPGH, and NKLD.

Belongs to the TRAFAC class translation factor GTPase superfamily. Classic translation factor GTPase family. PrfC subfamily.

Its subcellular location is the cytoplasm. Its function is as follows. Increases the formation of ribosomal termination complexes and stimulates activities of RF-1 and RF-2. It binds guanine nucleotides and has strong preference for UGA stop codons. It may interact directly with the ribosome. The stimulation of RF-1 and RF-2 is significantly reduced by GTP and GDP, but not by GMP. In Pasteurella multocida (strain Pm70), this protein is Peptide chain release factor 3 (prfC).